Here is a 98-residue protein sequence, read N- to C-terminus: Small ribosomal subunit protein bS20 (98 aa).

Basic residues predominate over residues 1–12 (MAPRKPSKKVGP). The tract at residues 1-34 (MAPRKPSKKVGPQKRPSAEKRVITSKKKQLRNQS) is disordered.

The protein belongs to the bacterial ribosomal protein bS20 family.

Functionally, binds directly to 16S ribosomal RNA. This Chlamydia muridarum (strain MoPn / Nigg) protein is Small ribosomal subunit protein bS20.